We begin with the raw amino-acid sequence, 66 residues long: Phylloseptin-S3 (66 aa).

Positions Met1 to Cys22 are cleaved as a signal peptide. The propeptide occupies Glu23–Arg46. Positions Glu25–Glu44 are disordered. Over residues Glu30–Lys41 the composition is skewed to acidic residues. At Phe65 the chain carries Phenylalanine amide.

The protein belongs to the frog skin active peptide (FSAP) family. Phylloseptin subfamily. Expressed by the skin glands.

It localises to the secreted. The protein localises to the target cell membrane. Its function is as follows. Antimicrobial peptide with activity against the Gram-positive S.pyogenes (MIC=12.5 uM), but not against all other bacteria tested (both Gram-positive and Gram-negative). Does not show activity against fungi, and against Leishmania species. This chain is Phylloseptin-S3, found in Phyllomedusa sauvagei (Sauvage's leaf frog).